A 99-amino-acid chain; its full sequence is Aspartyl/glutamyl-tRNA(Asn/Gln) amidotransferase subunit C (99 aa).

It belongs to the GatC family. In terms of assembly, heterotrimer of A, B and C subunits.

The catalysed reaction is L-glutamyl-tRNA(Gln) + L-glutamine + ATP + H2O = L-glutaminyl-tRNA(Gln) + L-glutamate + ADP + phosphate + H(+). It carries out the reaction L-aspartyl-tRNA(Asn) + L-glutamine + ATP + H2O = L-asparaginyl-tRNA(Asn) + L-glutamate + ADP + phosphate + 2 H(+). In terms of biological role, allows the formation of correctly charged Asn-tRNA(Asn) or Gln-tRNA(Gln) through the transamidation of misacylated Asp-tRNA(Asn) or Glu-tRNA(Gln) in organisms which lack either or both of asparaginyl-tRNA or glutaminyl-tRNA synthetases. The reaction takes place in the presence of glutamine and ATP through an activated phospho-Asp-tRNA(Asn) or phospho-Glu-tRNA(Gln). In Mycobacterium marinum (strain ATCC BAA-535 / M), this protein is Aspartyl/glutamyl-tRNA(Asn/Gln) amidotransferase subunit C.